We begin with the raw amino-acid sequence, 82 residues long: Small ribosomal subunit protein bS20 (82 aa).

Over residues 1–11 the composition is skewed to basic residues; that stretch reads MANHKSALKRI. The interval 1–20 is disordered; it reads MANHKSALKRIRSNETKRLR.

Belongs to the bacterial ribosomal protein bS20 family.

Its function is as follows. Binds directly to 16S ribosomal RNA. The sequence is that of Small ribosomal subunit protein bS20 from Christiangramia forsetii (strain DSM 17595 / CGMCC 1.15422 / KT0803) (Gramella forsetii).